Consider the following 218-residue polypeptide: Cytochrome b6 (218 aa).

A helical transmembrane segment spans residues 35 to 55 (IFYCLGGITLVCFLIQFATGF). Position 38 (Cys-38) interacts with heme c. Heme b is bound by residues His-89 and His-103. Transmembrane regions (helical) follow at residues 93-113 (ASMM…TGGF), 119-139 (LTWI…VTGY), and 189-209 (LHTF…FLMI). Residues His-190 and His-205 each contribute to the heme b site.

It belongs to the cytochrome b family. PetB subfamily. As to quaternary structure, the 4 large subunits of the cytochrome b6-f complex are cytochrome b6, subunit IV (17 kDa polypeptide, PetD), cytochrome f and the Rieske protein, while the 4 small subunits are PetG, PetL, PetM and PetN. The complex functions as a dimer. The cofactor is heme b. Heme c serves as cofactor.

Its subcellular location is the cellular thylakoid membrane. Component of the cytochrome b6-f complex, which mediates electron transfer between photosystem II (PSII) and photosystem I (PSI), cyclic electron flow around PSI, and state transitions. The protein is Cytochrome b6 of Prochlorococcus marinus (strain NATL1A).